The following is a 205-amino-acid chain: Probable ADP-ribosylation factor At2g15310 (205 aa).

The N-myristoyl glycine moiety is linked to residue glycine 2. GTP contacts are provided by residues 24–31 (GLDGSGKT), 67–71 (DIGGQ), and 126–129 (NKQD).

Belongs to the small GTPase superfamily. Arf family.

The protein resides in the golgi apparatus. In terms of biological role, GTP-binding protein involved in protein trafficking; may modulate vesicle budding and uncoating within the Golgi apparatus. This chain is Probable ADP-ribosylation factor At2g15310, found in Arabidopsis thaliana (Mouse-ear cress).